Reading from the N-terminus, the 475-residue chain is Methylenetetrahydrofolate--tRNA-(uracil-5-)-methyltransferase TrmFO (475 aa).

Position 13 to 18 (13 to 18) interacts with FAD; it reads GAGLAG.

The protein belongs to the MnmG family. TrmFO subfamily. It depends on FAD as a cofactor.

It is found in the cytoplasm. The enzyme catalyses uridine(54) in tRNA + (6R)-5,10-methylene-5,6,7,8-tetrahydrofolate + NADH + H(+) = 5-methyluridine(54) in tRNA + (6S)-5,6,7,8-tetrahydrofolate + NAD(+). The catalysed reaction is uridine(54) in tRNA + (6R)-5,10-methylene-5,6,7,8-tetrahydrofolate + NADPH + H(+) = 5-methyluridine(54) in tRNA + (6S)-5,6,7,8-tetrahydrofolate + NADP(+). In terms of biological role, catalyzes the folate-dependent formation of 5-methyl-uridine at position 54 (M-5-U54) in all tRNAs. The chain is Methylenetetrahydrofolate--tRNA-(uracil-5-)-methyltransferase TrmFO from Bradyrhizobium diazoefficiens (strain JCM 10833 / BCRC 13528 / IAM 13628 / NBRC 14792 / USDA 110).